A 193-amino-acid chain; its full sequence is Molybdopterin synthase catalytic subunit (193 aa).

Substrate-binding positions include 118–119 (HR), Lys134, and 141–143 (KKE). The interval 159–193 (DRTTTDGTTASSPAPATRPAKGGGCCGRKVRVNES) is disordered. A compositionally biased stretch (low complexity) spans 163-178 (TDGTTASSPAPATRPA).

This sequence belongs to the MoaE family. MOCS2B subfamily. In terms of assembly, heterotetramer; composed of 2 small (MOCS2A) and 2 large (MOCS2B) subunits.

It localises to the cytoplasm. The catalysed reaction is 2 [molybdopterin-synthase sulfur-carrier protein]-C-terminal-Gly-aminoethanethioate + cyclic pyranopterin phosphate + H2O = molybdopterin + 2 [molybdopterin-synthase sulfur-carrier protein]-C-terminal Gly-Gly + 2 H(+). Its pathway is cofactor biosynthesis; molybdopterin biosynthesis. Catalytic subunit of the molybdopterin synthase complex, a complex that catalyzes the conversion of precursor Z into molybdopterin. Acts by mediating the incorporation of 2 sulfur atoms from thiocarboxylated MOCS2A into precursor Z to generate a dithiolene group. This chain is Molybdopterin synthase catalytic subunit, found in Oryza sativa subsp. japonica (Rice).